The sequence spans 248 residues: Aspartate/glutamate leucyltransferase (248 aa).

Belongs to the R-transferase family. Bpt subfamily.

The protein resides in the cytoplasm. The catalysed reaction is N-terminal L-glutamyl-[protein] + L-leucyl-tRNA(Leu) = N-terminal L-leucyl-L-glutamyl-[protein] + tRNA(Leu) + H(+). It carries out the reaction N-terminal L-aspartyl-[protein] + L-leucyl-tRNA(Leu) = N-terminal L-leucyl-L-aspartyl-[protein] + tRNA(Leu) + H(+). In terms of biological role, functions in the N-end rule pathway of protein degradation where it conjugates Leu from its aminoacyl-tRNA to the N-termini of proteins containing an N-terminal aspartate or glutamate. This chain is Aspartate/glutamate leucyltransferase, found in Polynucleobacter asymbioticus (strain DSM 18221 / CIP 109841 / QLW-P1DMWA-1) (Polynucleobacter necessarius subsp. asymbioticus).